The following is a 187-amino-acid chain: Adenylate kinase (187 aa).

Position 10–15 (10–15 (GSGKGT)) interacts with ATP. The interval 30–59 (STGDLLRSEVVAGTPLGLQAKQVMAQGDLV) is NMP. Residues Thr-31, Arg-36, 57–59 (DLV), 85–88 (GYPR), and Gln-92 contribute to the AMP site. The tract at residues 126 to 136 (GRAQAEGREDD) is LID. Position 127 (Arg-127) interacts with ATP. The AMP site is built by Arg-133 and Arg-144. Residue Gly-172 coordinates ATP.

Belongs to the adenylate kinase family. As to quaternary structure, monomer.

Its subcellular location is the cytoplasm. The catalysed reaction is AMP + ATP = 2 ADP. Its pathway is purine metabolism; AMP biosynthesis via salvage pathway; AMP from ADP: step 1/1. In terms of biological role, catalyzes the reversible transfer of the terminal phosphate group between ATP and AMP. Plays an important role in cellular energy homeostasis and in adenine nucleotide metabolism. The chain is Adenylate kinase from Xylella fastidiosa (strain 9a5c).